Reading from the N-terminus, the 151-residue chain is Ribosome maturation factor RimP (151 aa).

It belongs to the RimP family.

The protein resides in the cytoplasm. In terms of biological role, required for maturation of 30S ribosomal subunits. The sequence is that of Ribosome maturation factor RimP from Shewanella frigidimarina (strain NCIMB 400).